The following is a 150-amino-acid chain: uncharacterized protein (150 aa).

The N-terminal stretch at 1–28 (MPLDVWIAFSYFIDFFQWLFMLNAEVMR) is a signal peptide.

This is an uncharacterized protein from Archaeoglobus fulgidus (strain ATCC 49558 / DSM 4304 / JCM 9628 / NBRC 100126 / VC-16).